A 245-amino-acid chain; its full sequence is MIIPAIDLIDGKVVRLYQGDYGQKTEYSADPQGRFDDYVAQGATQLHLVDLDGAKDSTKRQLTVIRKLLANTKAPVQIGGGVRTEQDVKDLLDAGANRVVIGSTAVKDPVTVAGWVEKYGADKIVLALDVNIDAEGNRKIAVAGWQEDSGVTIEALLAHYLPVGLKHVLCTDISRDGTLQGSNVALYRDLAAQFPQINWQASGGIGGIADIEALKGSGVGGVILGRSLLEGKFTVKEAIACWQDA.

The Proton acceptor role is filled by Asp-7. Asp-129 acts as the Proton donor in catalysis.

It belongs to the HisA/HisF family.

It is found in the cytoplasm. The enzyme catalyses 1-(5-phospho-beta-D-ribosyl)-5-[(5-phospho-beta-D-ribosylamino)methylideneamino]imidazole-4-carboxamide = 5-[(5-phospho-1-deoxy-D-ribulos-1-ylimino)methylamino]-1-(5-phospho-beta-D-ribosyl)imidazole-4-carboxamide. Its pathway is amino-acid biosynthesis; L-histidine biosynthesis; L-histidine from 5-phospho-alpha-D-ribose 1-diphosphate: step 4/9. This chain is 1-(5-phosphoribosyl)-5-[(5-phosphoribosylamino)methylideneamino] imidazole-4-carboxamide isomerase, found in Tolumonas auensis (strain DSM 9187 / NBRC 110442 / TA 4).